The chain runs to 121 residues: Small ribosomal subunit protein uS13 (121 aa).

The segment at 92 to 121 (RRGLPVRGQKTKNNSRTRKGPRKTMANKKK) is disordered.

Belongs to the universal ribosomal protein uS13 family. In terms of assembly, part of the 30S ribosomal subunit. Forms a loose heterodimer with protein S19. Forms two bridges to the 50S subunit in the 70S ribosome.

Functionally, located at the top of the head of the 30S subunit, it contacts several helices of the 16S rRNA. In the 70S ribosome it contacts the 23S rRNA (bridge B1a) and protein L5 of the 50S subunit (bridge B1b), connecting the 2 subunits; these bridges are implicated in subunit movement. Contacts the tRNAs in the A and P-sites. This is Small ribosomal subunit protein uS13 from Oceanobacillus iheyensis (strain DSM 14371 / CIP 107618 / JCM 11309 / KCTC 3954 / HTE831).